Consider the following 503-residue polypeptide: Probable cytosol aminopeptidase (503 aa).

Mn(2+)-binding residues include lysine 268 and aspartate 273. Residue lysine 280 is part of the active site. Mn(2+)-binding residues include aspartate 291, aspartate 350, and glutamate 352. Arginine 354 is an active-site residue.

The protein belongs to the peptidase M17 family. Requires Mn(2+) as cofactor.

Its subcellular location is the cytoplasm. The catalysed reaction is Release of an N-terminal amino acid, Xaa-|-Yaa-, in which Xaa is preferably Leu, but may be other amino acids including Pro although not Arg or Lys, and Yaa may be Pro. Amino acid amides and methyl esters are also readily hydrolyzed, but rates on arylamides are exceedingly low.. The enzyme catalyses Release of an N-terminal amino acid, preferentially leucine, but not glutamic or aspartic acids.. Functionally, presumably involved in the processing and regular turnover of intracellular proteins. Catalyzes the removal of unsubstituted N-terminal amino acids from various peptides. The chain is Probable cytosol aminopeptidase from Corynebacterium efficiens (strain DSM 44549 / YS-314 / AJ 12310 / JCM 11189 / NBRC 100395).